The sequence spans 75 residues: UPF0150 protein TM_1313 (75 aa).

The protein belongs to the UPF0150 family.

This is UPF0150 protein TM_1313 from Thermotoga maritima (strain ATCC 43589 / DSM 3109 / JCM 10099 / NBRC 100826 / MSB8).